The sequence spans 315 residues: Protein SHORT INTERNODES 1 (315 aa).

Gly residues predominate over residues 1 to 10; sequence MAGFPLGGGS. Disordered regions lie at residues 1–24 and 64–92; these read MAGF…PPVH and PPAP…GGGG. Over residues 70 to 82 the composition is skewed to low complexity; sequence AGASSSSSSRGMR. The span at 83 to 92 shows a compositional bias: gly residues; sequence SSGGGGGGGG. Zn(2+) is bound by residues cysteine 97, cysteine 100, cysteine 108, cysteine 113, cysteine 117, and cysteine 124. Residues 97–124 constitute a DNA-binding region (zn(2)-C6 fungal-type; degenerate); sequence CQDCGNQAKKDCTHMRCRTCCKSRGFAC. Composition is skewed to low complexity over residues 143–156 and 172–182; these read QQLA…AATA and RPSATTPTTSS. The interval 143 to 186 is disordered; that stretch reads QQLAALAASAAATAGGAGPSRDPTKRPRARPSATTPTTSSGDQQ. The short motif at 227-230 is the Required for homo- and heterodimerization element; that stretch reads IGGH.

Belongs to the SHI protein family. In terms of assembly, forms homodimers (via C-terminus). Interacts with SPL14/IPA1 (via C-terminus). Predominantly expressed in axillary buds and young panicles.

Its subcellular location is the nucleus. Functionally, regulates tillering and panicle branching by modulating SPL14/IPA1 transcriptional activity on the downstream TB1 and DEP1 target genes. Binds directly to the 5'-T/GCTCTAC-3' DNA motif found in the promoter regions of both TB1 and DEP1. Represses the DNA binding activity of SPL14/IPA1 toward the promoters of both TB1 and DEP1. Exhibits weak transcriptional activation activity in yeast cells. This chain is Protein SHORT INTERNODES 1, found in Oryza sativa subsp. japonica (Rice).